Here is a 134-residue protein sequence, read N- to C-terminus: Profilin-4 (134 aa).

Cysteine 13 and cysteine 118 form a disulfide bridge. The Involved in PIP2 interaction motif lies at alanine 84–threonine 100. Threonine 114 carries the post-translational modification Phosphothreonine.

Belongs to the profilin family. Occurs in many kinds of cells as a complex with monomeric actin in a 1:1 ratio. Phosphorylated by MAP kinases.

It localises to the cytoplasm. The protein localises to the cytoskeleton. Functionally, binds to actin and affects the structure of the cytoskeleton. At high concentrations, profilin prevents the polymerization of actin, whereas it enhances it at low concentrations. The polypeptide is Profilin-4 (Olea europaea (Common olive)).